The primary structure comprises 413 residues: Enhanced ethylene response protein 5 (413 aa).

Residues 216 to 402 form the PCI domain; sequence VTYMYYTGRL…KVVVLSKQDP (187 aa).

As to quaternary structure, interacts with EIN2 (via C-terminus). May also interact weakly with CSN8. Interacts with DSS1(V), AMPD, SAC3A, SAC3B and At5g61290 (AC Q9FLK4). Interacts with UCH1 and UCH2. Interacts with NUP1, anchoring the TREX-2 complex on the nuclear pore complex. Expressed at low levels in roots, leaves, stems and shoots. Detected in seedlings, roots, leaves and anthers.

The protein localises to the nucleus. In terms of biological role, involved in the regulation of ethylene response. Probable TREX-2 component required for nuclear RNA export. The TREX-2 complex (transcription and export complex 2) functions in docking export-competent ribonucleoprotein particles (mRNPs) to the nuclear entrance of the nuclear pore complex (nuclear basket). TREX-2 participates in mRNA export and accurate chromatin positioning in the nucleus by tethering genes to the nuclear periphery. This is Enhanced ethylene response protein 5 from Arabidopsis thaliana (Mouse-ear cress).